The primary structure comprises 323 residues: Lipid A biosynthesis acyltransferase 1 (323 aa).

The chain crosses the membrane as a helical span at residues 23 to 43; sequence YWGAWLGVAAMAGIALTPPKF. Residues 139–144 carry the HXXXXD motif motif; sequence HGWAVD.

This sequence belongs to the LpxL/LpxM/LpxP family. LpxM subfamily.

The protein resides in the cell inner membrane. It carries out the reaction an alpha-Kdo-(2-&gt;4)-alpha-Kdo-(2-&gt;6)-(acyl)-lipid IVA + a fatty acyl-[ACP] = an alpha-Kdo-(2-&gt;4)-alpha-Kdo-(2-&gt;6)-lipid A + holo-[ACP]. It functions in the pathway glycolipid biosynthesis; KDO(2)-lipid A biosynthesis; KDO(2)-lipid A from CMP-3-deoxy-D-manno-octulosonate and lipid IV(A): step 4/4. Its pathway is bacterial outer membrane biogenesis; lipopolysaccharide biosynthesis. Functionally, catalyzes the transfer of an acyl chain from an acyl-[acyl-carrier-protein] (ACP) to a Kdo(2)-(acyl)-lipid IV(A) to form a Kdo(2)-lipid A. The polypeptide is Lipid A biosynthesis acyltransferase 1 (Shigella flexneri).